The following is a 384-amino-acid chain: DNA replication and repair protein RecF (384 aa).

30–37 (GNNAQGKS) contacts ATP.

This sequence belongs to the RecF family.

The protein resides in the cytoplasm. The RecF protein is involved in DNA metabolism; it is required for DNA replication and normal SOS inducibility. RecF binds preferentially to single-stranded, linear DNA. It also seems to bind ATP. In Gloeothece citriformis (strain PCC 7424) (Cyanothece sp. (strain PCC 7424)), this protein is DNA replication and repair protein RecF.